Here is a 106-residue protein sequence, read N- to C-terminus: UPF0060 membrane protein Bxeno_B1021 (106 aa).

4 consecutive transmembrane segments (helical) span residues 2–22 (KTFL…YLPW), 30–50 (SIWL…LLTL), 58–78 (VYAA…WCVD), and 82–102 (PTLW…IIAF).

This sequence belongs to the UPF0060 family.

It is found in the cell inner membrane. The protein is UPF0060 membrane protein Bxeno_B1021 of Paraburkholderia xenovorans (strain LB400).